The sequence spans 796 residues: Nuclear GTPase SLIP-GC (796 aa).

107–114 (GITGAGKS) contributes to the GTP binding site. 2 coiled-coil regions span residues 158-185 (SDQEWKAELKDLTKLLHRAEQSGEEEAD) and 742-776 (GLCKELADVRNEQKEMEKLYRSLREVAENAQLRRS).

Its subcellular location is the nucleus speckle. Functionally, nuclear GTPase found in germinal center B-cells, where it may inhibit function of the activation-induced cytidine deaminase AICDA. Reduces somatic hypermutation in B-cells which may enhance genome stability. The protein is Nuclear GTPase SLIP-GC of Mus musculus (Mouse).